Reading from the N-terminus, the 290-residue chain is ATP synthase gamma chain (290 aa).

It belongs to the ATPase gamma chain family. As to quaternary structure, F-type ATPases have 2 components, CF(1) - the catalytic core - and CF(0) - the membrane proton channel. CF(1) has five subunits: alpha(3), beta(3), gamma(1), delta(1), epsilon(1). CF(0) has three main subunits: a, b and c.

It is found in the cell inner membrane. Produces ATP from ADP in the presence of a proton gradient across the membrane. The gamma chain is believed to be important in regulating ATPase activity and the flow of protons through the CF(0) complex. In Delftia acidovorans (strain DSM 14801 / SPH-1), this protein is ATP synthase gamma chain.